The sequence spans 488 residues: Alkaline nuclease (488 aa).

This sequence belongs to the herpesviridae alkaline nuclease family. Interacts with major DNA-binding protein; this interaction increases the nuclease processivity of the alkaline exonuclease.

It localises to the host nucleus. The protein localises to the host cytoplasm. Its function is as follows. Plays a role in processing non linear or branched viral DNA intermediates in order to promote the production of mature packaged unit-length linear progeny viral DNA molecules. Exhibits endonuclease and exonuclease activities and accepts both double-stranded and single-stranded DNA as substrate. Exonuclease digestion of DNA is in the 5'-&gt; 3' direction and the products are 5'-monophosphate nucleosides. Additionally, forms a recombinase with the major DNA-binding protein, which displays strand exchange activity. In Homo sapiens (Human), this protein is Alkaline nuclease (U70).